Reading from the N-terminus, the 56-residue chain is Male determiner protein Yob (56 aa).

Male determiner protein (M-factor) that controls male somatic sexual differentiation. Acts as a dominant factor that regulates the mRNA splicing of doublesex (dsx) transcripts and promotes expression of male splice forms of dsx. The protein is Male determiner protein Yob of Anopheles gambiae (African malaria mosquito).